The sequence spans 397 residues: Oxysterol-binding protein homolog C354.07c (397 aa).

N-linked (GlcNAc...) asparagine glycosylation is found at Asn186 and Asn195.

Belongs to the OSBP family.

The protein localises to the endoplasmic reticulum. The polypeptide is Oxysterol-binding protein homolog C354.07c (Schizosaccharomyces pombe (strain 972 / ATCC 24843) (Fission yeast)).